A 429-amino-acid chain; its full sequence is UDP-N-acetylglucosamine 1-carboxyvinyltransferase (429 aa).

Residue 22 to 23 (KN) coordinates phosphoenolpyruvate. Arginine 102 is a UDP-N-acetyl-alpha-D-glucosamine binding site. The active-site Proton donor is the cysteine 126. At cysteine 126 the chain carries 2-(S-cysteinyl)pyruvic acid O-phosphothioketal. Residues aspartate 316 and isoleucine 338 each coordinate UDP-N-acetyl-alpha-D-glucosamine.

Belongs to the EPSP synthase family. MurA subfamily.

It localises to the cytoplasm. The enzyme catalyses phosphoenolpyruvate + UDP-N-acetyl-alpha-D-glucosamine = UDP-N-acetyl-3-O-(1-carboxyvinyl)-alpha-D-glucosamine + phosphate. The protein operates within cell wall biogenesis; peptidoglycan biosynthesis. Its function is as follows. Cell wall formation. Adds enolpyruvyl to UDP-N-acetylglucosamine. The chain is UDP-N-acetylglucosamine 1-carboxyvinyltransferase from Methylorubrum extorquens (strain PA1) (Methylobacterium extorquens).